Reading from the N-terminus, the 170-residue chain is Adenine phosphoribosyltransferase (170 aa).

Belongs to the purine/pyrimidine phosphoribosyltransferase family. Homodimer.

The protein resides in the cytoplasm. The catalysed reaction is AMP + diphosphate = 5-phospho-alpha-D-ribose 1-diphosphate + adenine. It participates in purine metabolism; AMP biosynthesis via salvage pathway; AMP from adenine: step 1/1. In terms of biological role, catalyzes a salvage reaction resulting in the formation of AMP, that is energically less costly than de novo synthesis. The chain is Adenine phosphoribosyltransferase from Mycoplasma capricolum subsp. capricolum (strain California kid / ATCC 27343 / NCTC 10154).